We begin with the raw amino-acid sequence, 260 residues long: Carbonic anhydrase 2 (260 aa).

The Alpha-carbonic anhydrase domain maps to H3–F259. Residue H64 is the Proton donor/acceptor of the active site. The Zn(2+) site is built by H94, H96, and H119. A substrate-binding site is contributed by T198–T199.

This sequence belongs to the alpha-carbonic anhydrase family. Zn(2+) serves as cofactor.

It localises to the cytoplasm. It catalyses the reaction hydrogencarbonate + H(+) = CO2 + H2O. Its function is as follows. Catalyzes the reversible hydration of carbon dioxide. In Pseudaspius hakonensis (Big-scaled redfin), this protein is Carbonic anhydrase 2 (ca2).